The chain runs to 47 residues: PhoP/PhoQ regulator MgrB (47 aa).

A helical membrane pass occupies residues 6-26 (WVALVVVVLACLLLWAQVFNM).

It belongs to the MgrB family. In terms of assembly, may form homooligomers. Probably interacts with the periplasmic domain of PhoQ.

The protein localises to the cell inner membrane. Functionally, phoP-regulated transcription is redox-sensitive, being activated when the periplasm becomes more reducing. MgrB acts between DsbA/DsbB and PhoP/PhoQ in this pathway. Represses PhoP/PhoQ signaling, possibly by binding to the periplasmic domain of PhoQ, altering its activity and that of downstream effector PhoP. The sequence is that of PhoP/PhoQ regulator MgrB from Escherichia coli O127:H6 (strain E2348/69 / EPEC).